We begin with the raw amino-acid sequence, 151 residues long: Deoxyuridine 5'-triphosphate nucleotidohydrolase (151 aa).

Residues 70 to 72 (RSG), Asn-83, and 87 to 89 (TID) contribute to the substrate site.

The protein belongs to the dUTPase family. The cofactor is Mg(2+).

It catalyses the reaction dUTP + H2O = dUMP + diphosphate + H(+). Its pathway is pyrimidine metabolism; dUMP biosynthesis; dUMP from dCTP (dUTP route): step 2/2. In terms of biological role, this enzyme is involved in nucleotide metabolism: it produces dUMP, the immediate precursor of thymidine nucleotides and it decreases the intracellular concentration of dUTP so that uracil cannot be incorporated into DNA. This is Deoxyuridine 5'-triphosphate nucleotidohydrolase from Ruegeria pomeroyi (strain ATCC 700808 / DSM 15171 / DSS-3) (Silicibacter pomeroyi).